A 291-amino-acid polypeptide reads, in one-letter code: Homeobox protein SIX2 (291 aa).

The segment at residues 124–183 is a DNA-binding region (homeobox); the sequence is GEETSYCFKEKSRSVLREWYAHNPYPSPREKRELAEATGLTTTQVSNWFKNRRQRDRAAE. Residues 168–279 are disordered; that stretch reads VSNWFKNRRQ…HHHGLQDSIL (112 aa). Over residues 179 to 190 the composition is skewed to basic and acidic residues; that stretch reads DRAAEAKERENN. Residues 224-233 show a composition bias toward low complexity; sequence HSSSSPALLL. Positions 249–259 are enriched in pro residues; it reads PPGPSAVPVPV.

This sequence belongs to the SIX/Sine oculis homeobox family. Interacts with TCF7L2; in a canonical Wnt signaling independent manner; prevents transcription of differentiation genes in cap mesenchyme. Interacts with OSR1; form a strong repressor complex with TCF7L2, TLE2 and TLE3 to prevent the activation of Wnt/beta-catenin target genes in the cap mesenchyme. Interacts with HOXA11, EYA1 and EYA3. In terms of tissue distribution, strongly expressed in skeletal muscle. Expressed in Wilms' tumor and in the cap mesenchyme of fetal kidney (at protein level).

Its subcellular location is the nucleus. In terms of biological role, transcription factor that plays an important role in the development of several organs, including kidney, skull and stomach. During kidney development, maintains cap mesenchyme multipotent nephron progenitor cells in an undifferentiated state by opposing the inductive signals emanating from the ureteric bud and cooperates with WNT9B to promote renewing progenitor cells proliferation. Acts through its interaction with TCF7L2 and OSR1 in a canonical Wnt signaling independent manner preventing transcription of differentiation genes in cap mesenchyme such as WNT4. Also acts independently of OSR1 to activate expression of many cap mesenchyme genes, including itself, GDNF and OSR1. During craniofacial development plays a role in growth and elongation of the cranial base through regulation of chondrocyte differentiation. During stomach organogenesis, controls pyloric sphincter formation and mucosal growth through regulation of a gene network including NKX2-5, BMPR1B, BMP4, SOX9 and GREM1. During branchial arch development, acts to mediate HOXA2 control over the insulin-like growth factor pathway. May also be involved in limb tendon and ligament development. Plays a role in cell proliferation and migration. In Homo sapiens (Human), this protein is Homeobox protein SIX2 (SIX2).